An 88-amino-acid chain; its full sequence is Small ribosomal subunit protein bS20 (88 aa).

It belongs to the bacterial ribosomal protein bS20 family.

In terms of biological role, binds directly to 16S ribosomal RNA. This chain is Small ribosomal subunit protein bS20, found in Heliobacterium modesticaldum (strain ATCC 51547 / Ice1).